We begin with the raw amino-acid sequence, 123 residues long: WAP four-disulfide core domain protein 5 (123 aa).

Residues 1 to 24 (MRIQSLLLLGALLAVGSQPPAAFG) form the signal peptide. 2 WAP domains span residues 27–73 (KGEK…CVPR) and 74–121 (VSVK…RDPA). Disulfide bonds link C34–C62, C41–C66, C49–C61, C55–C70, C81–C109, C88–C113, C96–C108, and C102–C117.

It localises to the secreted. Functionally, putative acid-stable proteinase inhibitor. This is WAP four-disulfide core domain protein 5 (WFDC5) from Saimiri boliviensis boliviensis (Bolivian squirrel monkey).